The sequence spans 182 residues: MKLEMALSIALALAVVSWTQEFFPKEAQTLNWSKFSGFWYIIAIATDTQGFLPARDKRKLGASVVKVHKTGQLRVVIAFSRPRGCQSREVTLKKDRKRPVFRNTLKGVKGFHVLSTDYTYGLVYLRLGRGGSNYKSLLLFNRQNISSFLSLREFLDTCHILQLTKQATILPKDDSCAHTILP.

Residues 1-19 (MKLEMALSIALALAVVSWT) form the signal peptide. 2 N-linked (GlcNAc...) asparagine glycosylation sites follow: asparagine 31 and asparagine 144. The cysteines at positions 85 and 176 are disulfide-linked. Lysine 165 is modified (N6-acetyllysine).

It belongs to the calycin superfamily. Lipocalin family. As to expression, expressed in epididymis.

It is found in the secreted. In terms of biological role, may play a role in male fertility. May act as a retinoid carrier protein within the epididymis. The polypeptide is Epididymal-specific lipocalin-10 (Lcn10) (Mus musculus (Mouse)).